A 224-amino-acid polypeptide reads, in one-letter code: MLNKLYDWVDERLDITPLWRDIADHEVPEHVNPAHHFSAFVYCFGGLTFFVTVIQILSGMFLTMYYVPDIKNAWESVYYLQNEVAFGQIVRGMHHWGASLVIVMMFLHTLRVFFQGAYKKPREMNWIVGVLIFMVMMGLGFTGYLLPWDMKALFATKVGLQIAEAVPLIGPAIKTLLAGDPEIVGAQTLARFFAIHVFFLPAALLGLMAAHFLMIRRQGISGPL.

Residues 37–57 (FSAFVYCFGGLTFFVTVIQIL) traverse the membrane as a helical segment. Tyrosine 42 provides a ligand contact to heme b. Cysteine 43 contributes to the heme c binding site. Positions 91, 94, 108, and 111 each coordinate heme b. Transmembrane regions (helical) follow at residues 96–116 (WGASLVIVMMFLHTLRVFFQG), 126–146 (WIVGVLIFMVMMGLGFTGYLL), and 195–215 (IHVFFLPAALLGLMAAHFLMI). Heme b is bound by residues histidine 196 and histidine 211. 2 residues coordinate heme c: arginine 216 and isoleucine 220. Serine 221 provides a ligand contact to heme b.

Belongs to the cytochrome b family. In terms of assembly, the main subunits of the menaquinol:cytochrome c complex are a Rieske-type iron-sulfur protein (QcrA), a cytochrome b (QcrB) and a cytochrome c (QcrC). Heme b serves as cofactor. It depends on heme c as a cofactor.

The protein resides in the cell membrane. Functionally, component of the menaquinol:cytochrome c reductase complex. The polypeptide is Menaquinol:cytochrome c reductase cytochrome b subunit (qcrB) (Geobacillus thermodenitrificans).